A 113-amino-acid polypeptide reads, in one-letter code: Large ribosomal subunit protein bL17 (113 aa).

This sequence belongs to the bacterial ribosomal protein bL17 family. Part of the 50S ribosomal subunit. Contacts protein L32.

The chain is Large ribosomal subunit protein bL17 from Clostridium perfringens (strain ATCC 13124 / DSM 756 / JCM 1290 / NCIMB 6125 / NCTC 8237 / Type A).